The following is a 363-amino-acid chain: Putative transcriptional activator MSA2 (363 aa).

The segment at 1 to 20 (MVYTTPQQQQRFSSTPQSSH) is disordered. Phosphoserine is present on residues serine 157 and serine 292.

As to quaternary structure, interacts with transcription complexes SCB-binding factor (SBF) and MCB-binding factor (MBF). Interacts with SWI4.

In Saccharomyces cerevisiae (strain ATCC 204508 / S288c) (Baker's yeast), this protein is Putative transcriptional activator MSA2 (MSA2).